Consider the following 442-residue polypeptide: MNFFMEKNKDAGHRVTIKIPKTTVNNSLLQEFIKIRKTTKINGFRKGKTPIRVIQEKYGSAIYYDIFKKLMQKFFYEFIKTEKIKIIGSPKFYIHQDEDKKKEYFEYSVIYELYPQFQIKDIKQIKVNKINVEITEEDIKKNIETNKNKKNIWNPVNKAVKSYDRVTINYCIYEKNKKIKKFDKDNISFIVSKNTLIPQLNYKIINHFVNDIIFFKIKFHAFHPEKELQNKDITFKIKIIKIEKKQELESEKSNKKNITEKKTIQTDYQTIKNNLHSQINIITDKYLENQIIQKIVEKNILLLPPLLFQKEIKNLYKQYTKQYQEENSNILEKKYHMSLDSEVKKRLYFQIIIEQIILNNKLFADENNIQKLIKKISSNYKNPMEIIKLYNKNKNLKNTMKNIELERQAMLLLKKSIKIEKQNWNFERFLNYNWASHEELML.

Residues 163–248 (YDRVTINYCI…IIKIEKKQEL (86 aa)) form the PPIase FKBP-type domain.

This sequence belongs to the FKBP-type PPIase family. Tig subfamily.

It localises to the cytoplasm. It catalyses the reaction [protein]-peptidylproline (omega=180) = [protein]-peptidylproline (omega=0). Involved in protein export. Acts as a chaperone by maintaining the newly synthesized protein in an open conformation. Functions as a peptidyl-prolyl cis-trans isomerase. The chain is Trigger factor from Buchnera aphidicola subsp. Acyrthosiphon pisum (strain 5A).